The sequence spans 279 residues: Putative E3 ubiquitin-protein ligase C36B7.05c (279 aa).

The segment at 27-122 (DDESAQCNNC…VCVNCRQQLS (96 aa)) adopts an FYVE-type zinc-finger fold. Positions 33, 36, 49, 52, 57, 60, 114, and 117 each coordinate Zn(2+). A Phosphoserine modification is found at Ser-200. An RING-type; atypical zinc finger spans residues 230–273 (CIICFEEFAAGDRVARIEYCLCIFHLKCYRDWLSTGAAGCPVHA).

The protein resides in the cytoplasm. It is found in the nucleus. Its subcellular location is the endosome membrane. The protein localises to the vacuole membrane. It carries out the reaction S-ubiquitinyl-[E2 ubiquitin-conjugating enzyme]-L-cysteine + [acceptor protein]-L-lysine = [E2 ubiquitin-conjugating enzyme]-L-cysteine + N(6)-ubiquitinyl-[acceptor protein]-L-lysine.. The protein operates within protein modification; protein ubiquitination. Functionally, functions as an E3 ubiquitin-protein ligase. Binds phospholipid vesicles containing phosphatidylinositol 3-phosphate. The chain is Putative E3 ubiquitin-protein ligase C36B7.05c from Schizosaccharomyces pombe (strain 972 / ATCC 24843) (Fission yeast).